Consider the following 372-residue polypeptide: Aminomethyltransferase (372 aa).

It belongs to the GcvT family. In terms of assembly, the glycine cleavage system is composed of four proteins: P, T, L and H.

It carries out the reaction N(6)-[(R)-S(8)-aminomethyldihydrolipoyl]-L-lysyl-[protein] + (6S)-5,6,7,8-tetrahydrofolate = N(6)-[(R)-dihydrolipoyl]-L-lysyl-[protein] + (6R)-5,10-methylene-5,6,7,8-tetrahydrofolate + NH4(+). The glycine cleavage system catalyzes the degradation of glycine. The protein is Aminomethyltransferase of Streptomyces avermitilis (strain ATCC 31267 / DSM 46492 / JCM 5070 / NBRC 14893 / NCIMB 12804 / NRRL 8165 / MA-4680).